The sequence spans 294 residues: 33 kDa chaperonin (294 aa).

Intrachain disulfides connect Cys-239/Cys-241 and Cys-272/Cys-275.

It belongs to the HSP33 family. In terms of processing, under oxidizing conditions two disulfide bonds are formed involving the reactive cysteines. Under reducing conditions zinc is bound to the reactive cysteines and the protein is inactive.

It localises to the cytoplasm. Its function is as follows. Redox regulated molecular chaperone. Protects both thermally unfolding and oxidatively damaged proteins from irreversible aggregation. Plays an important role in the bacterial defense system toward oxidative stress. In Listeria monocytogenes serotype 4b (strain CLIP80459), this protein is 33 kDa chaperonin.